A 401-amino-acid chain; its full sequence is Probable peptidoglycan glycosyltransferase FtsW (401 aa).

Residues 1 to 26 (MAEVLRWLRLDLGQSGGLAWERLDWR) lie on the Cytoplasmic side of the membrane. Residues 27-47 (LALTVLALAGLGLVMVGSASV) form a helical membrane-spanning segment. Residues 48 to 65 (SIAEGATGDPLHYLYRQA) are Periplasmic-facing. The chain crosses the membrane as a helical span at residues 66-86 (VFLAVALMAAVACLHLSLDQF). The Cytoplasmic portion of the chain corresponds to 87 to 88 (YR). A helical transmembrane segment spans residues 89 to 109 (GGPVLLVLGFFLLLVVLIPGV). The Periplasmic segment spans residues 110–118 (GREVNGATR). A helical membrane pass occupies residues 119 to 139 (WIPLGLINLQVAEVARVCFII). The Cytoplasmic portion of the chain corresponds to 140 to 154 (YLAGYCVRRHAELPN). The helical transmembrane segment at 155 to 175 (TSSAFAVPLAVFSLAAVLLLA) threads the bilayer. The Periplasmic portion of the chain corresponds to 176 to 180 (QPDFG). Residues 181–201 (TALVLMATALGLLFLAGASLW) form a helical membrane-spanning segment. Position 202 (Arg-202) is a topological domain, cytoplasmic. The chain crosses the membrane as a helical span at residues 203 to 223 (IGVLGLLLAGAAWLLIVGSPY). The Periplasmic segment spans residues 224–278 (RWQRLTTFTDPWADPFNAGFQLTQSLIAIGRGEWFGVGLGASVQKLFYLPEAHTD). A helical transmembrane segment spans residues 279-299 (FLFAVLAEELGLLGVVVVVAL). Topologically, residues 300 to 322 (FTYLAWRGMQIGLASLRADRPFG) are cytoplasmic. A helical transmembrane segment spans residues 323-343 (AYLAWGLTISIGLQAFINMAV). Over 344-354 (TMGLLPTKGLT) the chain is Periplasmic. A helical transmembrane segment spans residues 355-375 (LPLMSYGGSSLIMTGIALALL). Topologically, residues 376 to 401 (LRVDYEARLAAQQPRPRKRPSGRVRP) are cytoplasmic.

This sequence belongs to the SEDS family. FtsW subfamily.

It is found in the cell inner membrane. It carries out the reaction [GlcNAc-(1-&gt;4)-Mur2Ac(oyl-L-Ala-gamma-D-Glu-L-Lys-D-Ala-D-Ala)](n)-di-trans,octa-cis-undecaprenyl diphosphate + beta-D-GlcNAc-(1-&gt;4)-Mur2Ac(oyl-L-Ala-gamma-D-Glu-L-Lys-D-Ala-D-Ala)-di-trans,octa-cis-undecaprenyl diphosphate = [GlcNAc-(1-&gt;4)-Mur2Ac(oyl-L-Ala-gamma-D-Glu-L-Lys-D-Ala-D-Ala)](n+1)-di-trans,octa-cis-undecaprenyl diphosphate + di-trans,octa-cis-undecaprenyl diphosphate + H(+). Its pathway is cell wall biogenesis; peptidoglycan biosynthesis. In terms of biological role, peptidoglycan polymerase that is essential for cell division. This Alkalilimnicola ehrlichii (strain ATCC BAA-1101 / DSM 17681 / MLHE-1) protein is Probable peptidoglycan glycosyltransferase FtsW.